A 421-amino-acid chain; its full sequence is Trimethyllysine dioxygenase, mitochondrial (421 aa).

Residues 1–15 (MWYHRLSHLHSRLQD) constitute a mitochondrion transit peptide. Lys-179 and Lys-236 each carry N6-acetyllysine. Residues His-242, Asp-244, and His-389 each coordinate Fe cation.

This sequence belongs to the gamma-BBH/TMLD family. As to quaternary structure, homodimer. Requires Fe(2+) as cofactor. L-ascorbate serves as cofactor. All isoforms, but isoform 8, are widely expressed in adult and fetal tissues. Isoform 8 is restricted to heart and skeletal muscle.

Its subcellular location is the mitochondrion matrix. It carries out the reaction N(6),N(6),N(6)-trimethyl-L-lysine + 2-oxoglutarate + O2 = (3S)-3-hydroxy-N(6),N(6),N(6)-trimethyl-L-lysine + succinate + CO2. It participates in amine and polyamine biosynthesis; carnitine biosynthesis. Converts trimethyllysine (TML) into hydroxytrimethyllysine (HTML). The sequence is that of Trimethyllysine dioxygenase, mitochondrial (TMLHE) from Homo sapiens (Human).